The sequence spans 426 residues: RuvB-like protein 1 (426 aa).

62-69 (GPVGSGKT) is a binding site for ATP.

Belongs to the RuvB family. As to quaternary structure, component of the SWR1 chromatin remodeling complex, the INO80 chromatin remodeling complex, and of the R2TP complex.

It localises to the nucleus. The enzyme catalyses ATP + H2O = ADP + phosphate + H(+). Its function is as follows. DNA helicase which participates in several chromatin remodeling complexes, including the SWR1 and the INO80 complexes. The SWR1 complex mediates the ATP-dependent exchange of histone H2A for the H2A variant HZT1 leading to transcriptional regulation of selected genes by chromatin remodeling. The INO80 complex remodels chromatin by shifting nucleosomes and is involved in DNA repair. Also involved in pre-rRNA processing. This is RuvB-like protein 1 (RVB1) from Encephalitozoon cuniculi (strain GB-M1) (Microsporidian parasite).